Consider the following 166-residue polypeptide: Interferon gamma (166 aa).

Residues 1–23 form the signal peptide; the sequence is MNYTSFILAFQLCAILGSSTYYC. The residue at position 24 (Q24) is a Pyrrolidone carboxylic acid. N-linked (GlcNAc...) asparagine glycans are attached at residues N39 and N106. The segment at 147-166 is disordered; the sequence is ANLRKRKRSQNPFRGRRALQ. Over residues 148–166 the composition is skewed to basic residues; the sequence is NLRKRKRSQNPFRGRRALQ.

This sequence belongs to the type II (or gamma) interferon family. In terms of assembly, homodimer. Interacts with IFNGR1 (via extracellular domain); this interaction promotes IFNGR1 dimerization. In terms of tissue distribution, released primarily from activated T lymphocytes.

Its subcellular location is the secreted. Type II interferon produced by immune cells such as T-cells and NK cells that plays crucial roles in antimicrobial, antiviral, and antitumor responses by activating effector immune cells and enhancing antigen presentation. Primarily signals through the JAK-STAT pathway after interaction with its receptor IFNGR1 to affect gene regulation. Upon IFNG binding, IFNGR1 intracellular domain opens out to allow association of downstream signaling components JAK2, JAK1 and STAT1, leading to STAT1 activation, nuclear translocation and transcription of IFNG-regulated genes. Many of the induced genes are transcription factors such as IRF1 that are able to further drive regulation of a next wave of transcription. Plays a role in class I antigen presentation pathway by inducing a replacement of catalytic proteasome subunits with immunoproteasome subunits. In turn, increases the quantity, quality, and repertoire of peptides for class I MHC loading. Increases the efficiency of peptide generation also by inducing the expression of activator PA28 that associates with the proteasome and alters its proteolytic cleavage preference. Up-regulates as well MHC II complexes on the cell surface by promoting expression of several key molecules such as cathepsins B/CTSB, H/CTSH, and L/CTSL. Participates in the regulation of hematopoietic stem cells during development and under homeostatic conditions by affecting their development, quiescence, and differentiation. This chain is Interferon gamma (IFNG), found in Equus caballus (Horse).